Reading from the N-terminus, the 98-residue chain is MKAVGAWLLCLLLLGLALQGAASRAHQHSMEIRTPDINPAWYAGRGIRPVGRFGRRRAAPGDGPRPGPRRVPACFRLEGGAEPSRALPGRLTAQLVQE.

The first 22 residues, 1-22 (MKAVGAWLLCLLLLGLALQGAA), serve as a signal peptide directing secretion. 2 disordered regions span residues 52 to 71 (RFGR…PRRV) and 79 to 98 (GGAE…LVQE). A Phenylalanine amide modification is found at F53. Residues 58–98 (AAPGDGPRPGPRRVPACFRLEGGAEPSRALPGRLTAQLVQE) constitute a propeptide that is removed on maturation.

Post-translationally, amidation of C-terminus is required for receptor interaction. Medulla oblongata and hypothalamus.

Its subcellular location is the secreted. Functionally, stimulates prolactin (PRL) release and regulates the expression of prolactin through its receptor GPR10. May stimulate lactotrophs directly to secrete PRL. This Bos taurus (Bovine) protein is Prolactin-releasing peptide (PRLH).